Here is a 330-residue protein sequence, read N- to C-terminus: Calponin-3 (330 aa).

N6-acetyllysine is present on K23. The Calponin-homology (CH) domain occupies 26 to 130; sequence QQAEEDLRNW…TLVALAGLAK (105 aa). K158 is subject to N6-methyllysine. Calponin-like repeat units follow at residues 164–189, 204–229, and 243–268; these read IGLQ…RHLY, ISLQ…RDIY, and ISLQ…RQVY. Positions 279–330 are disordered; the sequence is PVIHNGSQGTGTNGSEISDSDYQAEYPDEYHGEYPDDYPREYQYGDDQGIDY. The span at 306-318 shows a compositional bias: basic and acidic residues; it reads DEYHGEYPDDYPR.

The protein belongs to the calponin family.

In terms of biological role, thin filament-associated protein that is implicated in the regulation and modulation of smooth muscle contraction. It is capable of binding to actin, calmodulin and tropomyosin. The interaction of calponin with actin inhibits the actomyosin Mg-ATPase activity. This is Calponin-3 (Cnn3) from Mus musculus (Mouse).